The chain runs to 566 residues: Amidophosphoribosyltransferase 1, chloroplastic (566 aa).

Low complexity predominate over residues methionine 1–leucine 13. Disordered regions lie at residues methionine 1–proline 28 and valine 58–proline 87. Residues methionine 1–valine 58 constitute a chloroplast transit peptide. The span at threonine 15 to glutamine 25 shows a compositional bias: polar residues. A compositionally biased stretch (low complexity) spans serine 59–serine 68. Positions aspartate 70 to proline 87 are enriched in basic and acidic residues. The active-site Nucleophile is the cysteine 91. Positions cysteine 91–aspartate 311 constitute a Glutamine amidotransferase type-2 domain. [4Fe-4S] cluster contacts are provided by cysteine 327, cysteine 473, cysteine 524, and cysteine 527.

It in the C-terminal section; belongs to the purine/pyrimidine phosphoribosyltransferase family. The cofactor is [4Fe-4S] cluster. Requires Mg(2+) as cofactor. Expressed in flowers and roots. Also present in leaves, and, to a lower extent, in cotyledons.

The protein resides in the plastid. The protein localises to the chloroplast stroma. The catalysed reaction is 5-phospho-beta-D-ribosylamine + L-glutamate + diphosphate = 5-phospho-alpha-D-ribose 1-diphosphate + L-glutamine + H2O. Its pathway is purine metabolism; IMP biosynthesis via de novo pathway; N(1)-(5-phospho-D-ribosyl)glycinamide from 5-phospho-alpha-D-ribose 1-diphosphate: step 1/2. Catalyzes the first committed step of 'de novo' purine biosynthesis from glutamine. Involved in plastid biogenesis and cell division. The chain is Amidophosphoribosyltransferase 1, chloroplastic (ASE1) from Arabidopsis thaliana (Mouse-ear cress).